Consider the following 338-residue polypeptide: MKRMIALDGAQGEGGGQILRSALSLPMITGQPFTITGIRAGRAKPGLLRQHLTAVKAAAEICRATVEGAELGSQRLVFRPGTVRGGDYRFAIGSAGSCTLVLQTVLPALWFADGPSRVEVSGGTDNPSAPPADFIRRVLEPLLARIGVHQQTTLLRHGFYPAGGGVVATEVSPVASFNSLQLGERGNIVQMRGEVLLAGVPRHVAEREIATLAGSFSLHEQNIHNLPRDQGPGNTVSLEVESENITERFFVVGEKRVSAEVVAAQLVKEVKRYLASPAAVGEYLADQLVLPMALAGAGEFTVAHPSCHLQTNIAVVERFLPVRFSLIETDGVTRVSIE.

Residues Q103 and 283–287 (YLADQ) contribute to the ATP site. Catalysis depends on H308, which acts as the Tele-AMP-histidine intermediate.

The protein belongs to the RNA 3'-terminal cyclase family. Type 1 subfamily.

It localises to the cytoplasm. The catalysed reaction is a 3'-end 3'-phospho-ribonucleotide-RNA + ATP = a 3'-end 2',3'-cyclophospho-ribonucleotide-RNA + AMP + diphosphate. In terms of biological role, catalyzes the conversion of 3'-phosphate to a 2',3'-cyclic phosphodiester at the end of RNA. The mechanism of action of the enzyme occurs in 3 steps: (A) adenylation of the enzyme by ATP; (B) transfer of adenylate to an RNA-N3'P to produce RNA-N3'PP5'A; (C) and attack of the adjacent 2'-hydroxyl on the 3'-phosphorus in the diester linkage to produce the cyclic end product. The biological role of this enzyme is unknown but it is likely to function in some aspects of cellular RNA processing. In Escherichia coli O6:H1 (strain CFT073 / ATCC 700928 / UPEC), this protein is RNA 3'-terminal phosphate cyclase.